We begin with the raw amino-acid sequence, 365 residues long: Carbamoyl phosphate synthase small chain (365 aa).

CPSase regions lie at residues 1–166 (MKRQ…PSPG) and 1–169 (MKRQ…GRGH). L-glutamine is bound by residues Ser-45, Gly-218, and Gly-220. One can recognise a Glutamine amidotransferase type-1 domain in the interval 170-357 (RVVLVDFGMK…LTMIENFKKE (188 aa)). The active-site Nucleophile is the Cys-245. L-glutamine is bound by residues Leu-246, Gln-249, Asn-287, Gly-289, and Tyr-290. Catalysis depends on residues His-330 and Glu-332.

Belongs to the CarA family. In terms of assembly, composed of two chains; the small (or glutamine) chain promotes the hydrolysis of glutamine to ammonia, which is used by the large (or ammonia) chain to synthesize carbamoyl phosphate. Tetramer of heterodimers (alpha,beta)4.

The catalysed reaction is hydrogencarbonate + L-glutamine + 2 ATP + H2O = carbamoyl phosphate + L-glutamate + 2 ADP + phosphate + 2 H(+). It catalyses the reaction L-glutamine + H2O = L-glutamate + NH4(+). Its pathway is amino-acid biosynthesis; L-arginine biosynthesis; carbamoyl phosphate from bicarbonate: step 1/1. It participates in pyrimidine metabolism; UMP biosynthesis via de novo pathway; (S)-dihydroorotate from bicarbonate: step 1/3. In terms of biological role, small subunit of the glutamine-dependent carbamoyl phosphate synthetase (CPSase). CPSase catalyzes the formation of carbamoyl phosphate from the ammonia moiety of glutamine, carbonate, and phosphate donated by ATP, constituting the first step of 2 biosynthetic pathways, one leading to arginine and/or urea and the other to pyrimidine nucleotides. The small subunit (glutamine amidotransferase) binds and cleaves glutamine to supply the large subunit with the substrate ammonia. This chain is Carbamoyl phosphate synthase small chain, found in Bacillus cereus (strain ATCC 10987 / NRS 248).